Reading from the N-terminus, the 882-residue chain is Alanine--tRNA ligase (882 aa).

Zn(2+) contacts are provided by histidine 574, histidine 578, cysteine 682, and histidine 686. Residues 853–882 (GGRGGGKGALAQGGGLDPRKAREALPGLLP) form a disordered region. Positions 854 to 868 (GRGGGKGALAQGGGL) are enriched in gly residues.

Belongs to the class-II aminoacyl-tRNA synthetase family. Zn(2+) is required as a cofactor.

It localises to the cytoplasm. The enzyme catalyses tRNA(Ala) + L-alanine + ATP = L-alanyl-tRNA(Ala) + AMP + diphosphate. Catalyzes the attachment of alanine to tRNA(Ala) in a two-step reaction: alanine is first activated by ATP to form Ala-AMP and then transferred to the acceptor end of tRNA(Ala). Also edits incorrectly charged Ser-tRNA(Ala) and Gly-tRNA(Ala) via its editing domain. This Thermus thermophilus (strain ATCC 27634 / DSM 579 / HB8) protein is Alanine--tRNA ligase.